A 424-amino-acid polypeptide reads, in one-letter code: UDP-N-acetylglucosamine 1-carboxyvinyltransferase (424 aa).

22–23 is a binding site for phosphoenolpyruvate; that stretch reads KN. Position 95 (Arg95) interacts with UDP-N-acetyl-alpha-D-glucosamine. Cys119 serves as the catalytic Proton donor. Position 119 is a 2-(S-cysteinyl)pyruvic acid O-phosphothioketal (Cys119). Residues 124-128, Asp311, and Ile333 contribute to the UDP-N-acetyl-alpha-D-glucosamine site; that span reads RPVDQ.

It belongs to the EPSP synthase family. MurA subfamily.

Its subcellular location is the cytoplasm. It catalyses the reaction phosphoenolpyruvate + UDP-N-acetyl-alpha-D-glucosamine = UDP-N-acetyl-3-O-(1-carboxyvinyl)-alpha-D-glucosamine + phosphate. It functions in the pathway cell wall biogenesis; peptidoglycan biosynthesis. Functionally, cell wall formation. Adds enolpyruvyl to UDP-N-acetylglucosamine. This is UDP-N-acetylglucosamine 1-carboxyvinyltransferase from Polaromonas naphthalenivorans (strain CJ2).